Reading from the N-terminus, the 103-residue chain is Spherulin-3A (103 aa).

Positions M1–K13 are N-terminal arm. 2 Beta/gamma crystallin 'Greek key' domains span residues G14–P55 and T57–T99.

This sequence belongs to the beta/gamma-crystallin family.

Its subcellular location is the cytoplasm. In terms of biological role, structural protein. This Physarum polycephalum (Slime mold) protein is Spherulin-3A.